The following is a 171-amino-acid chain: Voltage-dependent P/Q-type calcium channel subunit alpha-1A (171 aa).

The helical transmembrane segment at 1-11 (FVTVLGSITDI) threads the bilayer. Residues 1 to 171 (FVTVLGSITD…LMLNLFVAVI (171 aa)) form an IV repeat. Residues 12-18 (LVTEFGN) are Extracellular-facing. A helical membrane pass occupies residues 19–37 (NFINLSFLRLFRAARLIKL). The Cytoplasmic portion of the chain corresponds to 38 to 56 (LRQGYTIRILLWTFVQSFK). The chain crosses the membrane as a helical span at residues 57–76 (ALPYVCLLIAMLFFIYAIIG). The Extracellular segment spans residues 77–143 (MQVFGNIGIE…ENSGIKEDEC (67 aa)). Residues 144-168 (GNEFAYFYFVSFIFLCSFLMLNLFV) traverse the membrane as a helical segment. The Cytoplasmic portion of the chain corresponds to 169–171 (AVI).

It belongs to the calcium channel alpha-1 subunit (TC 1.A.1.11) family. CACNA1A subfamily. Voltage-dependent calcium channels are multisubunit complexes, consisting of alpha-1, alpha-2, beta and delta subunits in a 1:1:1:1 ratio. The channel activity is directed by the pore-forming and voltage-sensitive alpha-1 subunit. In many cases, this subunit is sufficient to generate voltage-sensitive calcium channel activity. The auxiliary subunits beta and alpha-2/delta linked by a disulfide bridge regulate the channel activity.

The protein resides in the cell membrane. The enzyme catalyses Ca(2+)(in) = Ca(2+)(out). Functionally, the isoform alpha-1A gives rise to P and/or Q-type calcium currents. P/Q-type calcium channels belong to the 'high-voltage activated' (HVA) group. This Gallus gallus (Chicken) protein is Voltage-dependent P/Q-type calcium channel subunit alpha-1A (CACNA1A).